Reading from the N-terminus, the 149-residue chain is D-aminoacyl-tRNA deacylase (149 aa).

The Gly-cisPro motif, important for rejection of L-amino acids motif lies at 139 to 140; it reads GP.

The protein belongs to the DTD family. Homodimer.

Its subcellular location is the cytoplasm. It catalyses the reaction glycyl-tRNA(Ala) + H2O = tRNA(Ala) + glycine + H(+). The catalysed reaction is a D-aminoacyl-tRNA + H2O = a tRNA + a D-alpha-amino acid + H(+). Functionally, an aminoacyl-tRNA editing enzyme that deacylates mischarged D-aminoacyl-tRNAs. Also deacylates mischarged glycyl-tRNA(Ala), protecting cells against glycine mischarging by AlaRS. Acts via tRNA-based rather than protein-based catalysis; rejects L-amino acids rather than detecting D-amino acids in the active site. By recycling D-aminoacyl-tRNA to D-amino acids and free tRNA molecules, this enzyme counteracts the toxicity associated with the formation of D-aminoacyl-tRNA entities in vivo and helps enforce protein L-homochirality. The sequence is that of D-aminoacyl-tRNA deacylase (dtd1) from Schizosaccharomyces pombe (strain 972 / ATCC 24843) (Fission yeast).